The following is a 230-amino-acid chain: Nicotinamide riboside kinase (230 aa).

12–20 (GASCSGKST) is a binding site for ATP. Residues Ser-19 and Asp-38 each coordinate Mg(2+). Asp-38 serves as the catalytic Proton acceptor. Substrate is bound by residues 38–41 (DDFY) and 56–57 (WD). Arg-153 contacts ATP. Residues Arg-154 and 159-160 (GY) each bind substrate. Residues 157-159 (RTG) and 203-205 (RIQ) each bind ATP.

This sequence belongs to the uridine kinase family. NRK subfamily.

The enzyme catalyses beta-nicotinamide D-riboside + ATP = beta-nicotinamide D-ribonucleotide + ADP + H(+). It catalyses the reaction beta-D-ribosylnicotinate + ATP = nicotinate beta-D-ribonucleotide + ADP + H(+). Its pathway is cofactor biosynthesis; NAD(+) biosynthesis. Catalyzes the phosphorylation of nicotinamide riboside (NR) and nicotinic acid riboside (NaR) to form nicotinamide mononucleotide (NMN) and nicotinic acid mononucleotide (NaMN). The polypeptide is Nicotinamide riboside kinase (nrk1) (Schizosaccharomyces pombe (strain 972 / ATCC 24843) (Fission yeast)).